The sequence spans 607 residues: Guanine nucleotide-binding protein-like 1 (607 aa).

Residues methionine 1–lysine 14 are compositionally biased toward basic residues. The segment at methionine 1–tyrosine 81 is disordered. Basic and acidic residues predominate over residues glutamine 15 to leucine 26. Serine 32, serine 33, and serine 34 each carry phosphoserine. Threonine 48 and threonine 50 each carry phosphothreonine. Phosphoserine is present on residues serine 51 and serine 68. The 241-residue stretch at tryptophan 178–proline 418 folds into the CP-type G domain. Asparagine 225–aspartate 228 provides a ligand contact to GTP. A Phosphoserine modification is found at serine 324. GTP is bound by residues glycine 367–serine 374 and aspartate 411–leucine 415. Residues glycine 547–cysteine 607 are disordered. The segment covering glycine 550–threonine 584 has biased composition (acidic residues). A phosphoserine mark is found at serine 561, serine 562, and serine 563.

Belongs to the TRAFAC class YlqF/YawG GTPase family.

Its function is as follows. Possible regulatory or functional link with the histocompatibility cluster. The sequence is that of Guanine nucleotide-binding protein-like 1 (GNL1) from Homo sapiens (Human).